A 242-amino-acid chain; its full sequence is Sec-independent protein translocase protein TatCd (242 aa).

Transmembrane regions (helical) follow at residues 19–39 (IIVTLAAFFLFLITAFLFVQD), 60–80 (ILWVYMMLSGICAIAASIPVA), and 107–127 (LFALFLAGISFGYFVLFPIVL). The tract at residues 128–149 (SFLTHLSSGHFETMFTADRYFR) is interaction with TatAd. A helical transmembrane segment spans residues 150-170 (FMVNLSLPFGFLFEMPLVVMF). An interaction with TatAd region spans residues 171–187 (LTRLGILNPYRLAKARK). The next 2 membrane-spanning stretches (helical) occupy residues 188–208 (LSYFLLIVVSILITPPDFISD) and 209–229 (FLVMIPLLVLFEVSVTLSAFV).

This sequence belongs to the TatC family. In terms of assembly, forms a complex with TatAd. Two types of complexes exist: one composed of TatAd and TatCd, and another composed only of TatAd.

The protein resides in the cell membrane. Part of the twin-arginine translocation (Tat) system that transports large folded proteins containing a characteristic twin-arginine motif in their signal peptide across membranes. Required for PhoD secretion. TatCd promotes membrane localization of TatAd via domain specific interactions. TatCd is required for stabile production of TatAd as well as for its maintenance. The chain is Sec-independent protein translocase protein TatCd from Bacillus subtilis (strain 168).